A 138-amino-acid polypeptide reads, in one-letter code: Basic phospholipase A2 BP-II (138 aa).

An N-terminal signal peptide occupies residues 1-16 (MRTLWIMAVLLVGVDG). 7 disulfide bridges follow: C42/C132, C44/C60, C59/C112, C65/C138, C66/C105, C73/C98, and C91/C103. Ca(2+) contacts are provided by G45 and G47. H63 is an active-site residue. D106 is an active-site residue.

This sequence belongs to the phospholipase A2 family. Group II subfamily. K49 sub-subfamily. Exists as a monomer in both solution and crystal states. In the presence of SDS or probably in the presence of phospholipids, assembles to form SDS-resistant stable oligomers. Ca(2+) serves as cofactor. In terms of tissue distribution, expressed by the venom gland.

The protein localises to the secreted. It carries out the reaction a 1,2-diacyl-sn-glycero-3-phosphocholine + H2O = a 1-acyl-sn-glycero-3-phosphocholine + a fatty acid + H(+). Snake venom phospholipase A2 (PLA2) that shows anticoagulant activities, strong myolytic activity, infiltration of polymorphonuclear cells, and edema in stromal tissues. Induces cell death of Jurkat cells in a concentration-dependent manner. Shows a low phospholipase A2 activity. PLA2 catalyzes the calcium-dependent hydrolysis of the 2-acyl groups in 3-sn-phosphoglycerides. The polypeptide is Basic phospholipase A2 BP-II (Protobothrops flavoviridis (Habu)).